The following is a 698-amino-acid chain: MQDDLLMDKSKTQPQPQQQQRQQQQPQPESSVSEAPSTPLSSETPKPEENSAVPALSPAAAPPAPNGPDKMQMESPLLPGLSFHQPPQQPPPPQEPAAPGASLSPSFGSTWSTGTTNAVEDSFFQGITPVNGTMLFQNFPHHVNPVFGGTFSPQIGLAQTQHHQQPPPPAPAPQPAQPAQPPQAQPPQQRRSPASPSQAPYAQRSAAAAYGHQPIMTSKPSSSSAVAAAAAAAAASSASSSWNTHQSVNAAWSAPSNPWGGLQAGRDPRRAVGVGVGVGVGVPSPLNPISPLKKPFSSNVIAPPKFPRAAPLTSKSWMEDNAFRTDNGNNLLPFQDRSRPYDTFNLHSLENSLMDMIRTDHEPLKGKHYPPSGPPMSFADIMWRNHFAGRMGINFHHPGTDNIMALNNAFLDDSHGDQALSSGLSSPTRCQNGERVERYSRKVFVGGLPPDIDEDEITASFRRFGPLVVDWPHKAESKSYFPPKGYAFLLFQEESSVQALIDACLEEDGKLYLCVSSPTIKDKPVQIRPWNLSDSDFVMDGSQPLDPRKTIFVGGVPRPLRAVELAMIMDRLYGGVCYAGIDTDPELKYPKGAGRVAFSNQQSYIAAISARFVQLQHNDIDKRVEVKPYVLDDQMCDECQGTRCGGKFAPFFCANVTCLQYYCEYCWASIHSRAGREFHKPLVKEGGDRPRHVPFRWS.

A compositionally biased stretch (basic and acidic residues) spans 1-11 (MQDDLLMDKSK). 2 disordered regions span residues 1–114 (MQDD…WSTG) and 158–208 (AQTQ…SAAA). The segment covering 13–28 (QPQPQQQQRQQQQPQP) has biased composition (low complexity). Residues 29–44 (ESSVSEAPSTPLSSET) are compositionally biased toward polar residues. A compositionally biased stretch (pro residues) spans 87–96 (PQQPPPPQEP). The segment covering 103-114 (LSPSFGSTWSTG) has biased composition (polar residues). Over residues 165–185 (QPPPPAPAPQPAQPAQPPQAQ) the composition is skewed to pro residues. Low complexity predominate over residues 186 to 208 (PPQQRRSPASPSQAPYAQRSAAA). 3 positions are modified to phosphoserine: serine 192, serine 195, and serine 290. An Asymmetric dimethylarginine modification is found at arginine 308. RRM domains follow at residues 441-532 (RKVF…PWNL) and 549-631 (KTIF…PYVL).

It belongs to the RRM CPEB family. In terms of assembly, following synaptic activity, forms amyloid-like oligomers. Aggregation requires an intact actin cytoskeleton. Interacts with STAT5B; this inhibits STAT5B-mediated transcriptional activation. Interacts with E3 ubiquitin-protein ligase NEURL1; this leads to monoubiquitination and activation of CPEB3. Interacts with CAPN2; this leads to cleavage of CPEB3. Interacts (via C-terminal RNA-binding region) with TOB1; TOB1 also binds CNOT7/CAF1 and recruits it to CPEB3 to form a ternary complex. Interacts with SUMO-conjugating enzyme UBC9. Interacts with IPO5; the interaction is enhanced in a RAN-regulated manner following neuronal stimulation and mediates CPEB3 nuclear import. Interacts with exportin XPO1/CRM1. In terms of processing, activated by NEURL1-mediated monoubiquitination, resulting in the growth of new dendritic spines and increased levels of GRIA1 and GRIA2. NEURL1-mediated monoubiquitination facilitates synaptic plasticity and hippocampal-dependent memory storage. Under basal unstimulated conditions when CPEB3 is mainly unaggregated, sumoylated and acts as a translational repressor. Following neuronal stimulation, becomes desumoylated and aggregated which is required for the translation of mRNA targets and for dendritic filopodia formation. Post-translationally, following neuronal stimulation, cleaved by CAPN2 which abolishes its translational repressor activity, leading to translation of CPEB3 target mRNAs. In terms of processing, phosphorylation is enhanced by neuronal stimulation.

The protein resides in the cytoplasm. It is found in the nucleus. It localises to the synapse. Its subcellular location is the cell projection. The protein localises to the dendrite. The protein resides in the postsynaptic density. Sequence-specific RNA-binding protein which acts as a translational repressor in the basal unstimulated state but, following neuronal stimulation, acts as a translational activator. In contrast to CPEB1, does not bind to the cytoplasmic polyadenylation element (CPE), a uridine-rich sequence element within the mRNA 3'-UTR, but binds to a U-rich loop within a stem-loop structure. Required for the consolidation and maintenance of hippocampal-based long term memory. In the basal state, binds to the mRNA 3'-UTR of the glutamate receptors GRIA2/GLUR2 mRNA and negatively regulates their translation. Also represses the translation of DLG4, GRIN1, GRIN2A and GRIN2B. When activated, acts as a translational activator of GRIA1 and GRIA2. In the basal state, suppresses SUMO2 translation but activates it following neuronal stimulation. Binds to the 3'-UTR of TRPV1 mRNA and represses TRPV1 translation which is required to maintain normal thermoception. Binds actin mRNA, leading to actin translational repression in the basal state and to translational activation following neuronal stimulation. Negatively regulates target mRNA levels by binding to TOB1 which recruits CNOT7/CAF1 to a ternary complex and this leads to target mRNA deadenylation and decay. In addition to its role in translation, binds to and inhibits the transcriptional activation activity of STAT5B without affecting its dimerization or DNA-binding activity. This, in turn, represses transcription of the STAT5B target gene EGFR which has been shown to play a role in enhancing learning and memory performance. In contrast to CPEB1, CPEB2 and CPEB4, not required for cell cycle progression. This is Cytoplasmic polyadenylation element-binding protein 3 (CPEB3) from Homo sapiens (Human).